We begin with the raw amino-acid sequence, 95 residues long: Small ribosomal subunit protein uS17 (95 aa).

Belongs to the universal ribosomal protein uS17 family. In terms of assembly, part of the 30S ribosomal subunit.

One of the primary rRNA binding proteins, it binds specifically to the 5'-end of 16S ribosomal RNA. In Phytoplasma australiense, this protein is Small ribosomal subunit protein uS17.